The sequence spans 387 residues: Chaperone protein DnaJ (387 aa).

Residues 6-70 (DYYETLGVSR…QKRAAYDQYG (65 aa)) form the J domain. A CR-type zinc finger spans residues 143–225 (GKDTKISYDR…CHGTGHEQER (83 aa)). 8 residues coordinate Zn(2+): C156, C159, C173, C176, C199, C202, C213, and C216. 4 CXXCXGXG motif repeats span residues 156 to 163 (CHTCNGSG), 173 to 180 (CHKCHGSG), 199 to 206 (CDVCGGTG), and 213 to 220 (CPTCHGTG).

It belongs to the DnaJ family. Homodimer. The cofactor is Zn(2+).

The protein resides in the cytoplasm. Functionally, participates actively in the response to hyperosmotic and heat shock by preventing the aggregation of stress-denatured proteins and by disaggregating proteins, also in an autonomous, DnaK-independent fashion. Unfolded proteins bind initially to DnaJ; upon interaction with the DnaJ-bound protein, DnaK hydrolyzes its bound ATP, resulting in the formation of a stable complex. GrpE releases ADP from DnaK; ATP binding to DnaK triggers the release of the substrate protein, thus completing the reaction cycle. Several rounds of ATP-dependent interactions between DnaJ, DnaK and GrpE are required for fully efficient folding. Also involved, together with DnaK and GrpE, in the DNA replication of plasmids through activation of initiation proteins. The polypeptide is Chaperone protein DnaJ (Lacticaseibacillus paracasei (strain ATCC 334 / BCRC 17002 / CCUG 31169 / CIP 107868 / KCTC 3260 / NRRL B-441) (Lactobacillus paracasei)).